Consider the following 112-residue polypeptide: MEVKAVYKYARISAKKMRDVAQEIQGLSVSQATDILSYTPKKGAYLLNKTLKSALANAENNAELSVDTLVVKSVMVDEGPTMRRTMPRARGSANMIRKRTSHITVILADQEG.

It belongs to the universal ribosomal protein uL22 family. Part of the 50S ribosomal subunit.

In terms of biological role, this protein binds specifically to 23S rRNA; its binding is stimulated by other ribosomal proteins, e.g. L4, L17, and L20. It is important during the early stages of 50S assembly. It makes multiple contacts with different domains of the 23S rRNA in the assembled 50S subunit and ribosome. Its function is as follows. The globular domain of the protein is located near the polypeptide exit tunnel on the outside of the subunit, while an extended beta-hairpin is found that lines the wall of the exit tunnel in the center of the 70S ribosome. In Akkermansia muciniphila (strain ATCC BAA-835 / DSM 22959 / JCM 33894 / BCRC 81048 / CCUG 64013 / CIP 107961 / Muc), this protein is Large ribosomal subunit protein uL22.